Here is a 362-residue protein sequence, read N- to C-terminus: Solute carrier family 25 member 3 (362 aa).

Residues 1–49 constitute a mitochondrion transit peptide; that stretch reads MFSSVAHLARANPFNTPHLQLVHDGLGDLRSSSPGPTGQPRRPRNLAAA. At 50–63 the chain is on the mitochondrial intermembrane side; it reads AVEEQYSCDYGSGR. 3 Solcar repeats span residues 63 to 147, 160 to 244, and 261 to 339; these read RFFI…FKVL, WRTS…TVEA, and EQLV…VKVY. A helical membrane pass occupies residues 64-86; sequence FFILCGLGGIISCGTTHTALVPL. At 87-121 the chain is on the mitochondrial matrix side; it reads DLVKCRMQVDPQKYKGIFNGFSVTLKEDGVRGLAK. An N6-acetyllysine modification is found at lysine 99. Lysine 112 carries the N6-methyllysine modification. The chain crosses the membrane as a helical span at residues 122-141; the sequence is GWAPTFLGYSMQGLCKFGFY. Over 142–161 the chain is Mitochondrial intermembrane; that stretch reads EVFKVLYSNMLGEENTYLWR. A helical transmembrane segment spans residues 162–183; the sequence is TSLYLAASASAEFFADIALAPM. The Mitochondrial matrix portion of the chain corresponds to 184-218; sequence EAAKVRIQTQPGYANTLRDAAPKMYKEEGLKAFYK. Residue tyrosine 196 is modified to Phosphotyrosine. Lysine 209 is modified (N6-acetyllysine). The helical transmembrane segment at 219–238 threads the bilayer; the sequence is GVAPLWMRQIPYTMMKFACF. At 239–261 the chain is on the mitochondrial intermembrane side; that stretch reads ERTVEALYKFVVPKPRSECSKPE. Residues 262–284 form a helical membrane-spanning segment; it reads QLVVTFVAGYIAGVFCAIVSHPA. Residues 285–314 lie on the Mitochondrial matrix side of the membrane; the sequence is DSVVSVLNKEKGSSASLVLKRLGFKGVWKG. A helical membrane pass occupies residues 315-333; that stretch reads LFARIIMIGTLTALQWFIY. The Mitochondrial intermembrane segment spans residues 334 to 362; it reads DSVKVYFRLPRPPPPEMPESLKKKLGLTQ.

It belongs to the mitochondrial carrier (TC 2.A.29) family. In terms of assembly, interacts with PPIF; the interaction is impaired by CsA.

It localises to the mitochondrion inner membrane. It catalyses the reaction phosphate(in) + H(+)(in) = phosphate(out) + H(+)(out). In terms of biological role, inorganic ion transporter that transports phosphate or copper ions across the mitochondrial inner membrane into the matrix compartment. Mediates proton-coupled symport of phosphate ions necessary for mitochondrial oxidative phosphorylation of ADP to ATP. Transports copper ions probably in the form of anionic copper(I) complexes to maintain mitochondrial matrix copper pool and to supply copper for cytochrome C oxidase complex assembly. May also play a role in regulation of the mitochondrial permeability transition pore (mPTP). The chain is Solute carrier family 25 member 3 from Homo sapiens (Human).